A 142-amino-acid chain; its full sequence is Large ribosomal subunit protein uL13 (142 aa).

Belongs to the universal ribosomal protein uL13 family. Part of the 50S ribosomal subunit.

This protein is one of the early assembly proteins of the 50S ribosomal subunit, although it is not seen to bind rRNA by itself. It is important during the early stages of 50S assembly. The sequence is that of Large ribosomal subunit protein uL13 from Wigglesworthia glossinidia brevipalpis.